The chain runs to 164 residues: Transcription elongation factor GreA (164 aa).

Residues 15–76 are a coiled coil; that stretch reads DRLKNELDQL…LQELLNSAKV (62 aa).

The protein belongs to the GreA/GreB family.

Necessary for efficient RNA polymerase transcription elongation past template-encoded arresting sites. The arresting sites in DNA have the property of trapping a certain fraction of elongating RNA polymerases that pass through, resulting in locked ternary complexes. Cleavage of the nascent transcript by cleavage factors such as GreA or GreB allows the resumption of elongation from the new 3'terminus. GreA releases sequences of 2 to 3 nucleotides. This is Transcription elongation factor GreA from Rhodococcus erythropolis (strain PR4 / NBRC 100887).